The sequence spans 446 residues: MEEWDGDVFTWNAGKEDIYTLIESILRLLKNGCKGMENMVVKYLGTGATDSLYMYFPWLRGRDLESRLSVEHQIDRFWKIRFELHEERTNSMDRYEDIVSSFLALDTKCGILGKLEGQMALVDEIRRIYSITSQGSPRKKRLREYRLHGTLCLHPGAGSMRLYASLFSLDATVKEIIFPEIEIFPSSTFPILVPLRTDRGVSRIIYKKGDDLTRDLFVLETIRYMSRLMGVDLVTYKVIPLSRKEGIVEVVDGIDFTRIRSRKDLEMYIEEDRDPRHQESFEKRKVFVSTLCGYSVACYVMGIGDRNPGNMMVTRDGKFFHIDFSHVFGRDPKPISSRITIARPIRDYLVNDELIYQDFLARSGEAFLQIRRSCRKIFVLWCILAQNRIFQFDLNEIIPFAQARLRMEMSEQRALELFEKEIRGAVGSLKTSVAHLINRVGMFLRR.

The region spanning Ile-177–Lys-430 is the PI3K/PI4K catalytic domain. The G-loop stretch occupies residues Ile-183–Phe-189. Positions Gly-302–Asn-310 are catalytic loop. The segment at His-321–Ala-342 is activation loop.

This sequence belongs to the PI3/PI4-kinase family. Component of the autophagy-specific VPS34 PI3-kinase complex I composed; and of the VPS34 PI3-kinase complex II.

Its subcellular location is the golgi apparatus. It is found in the trans-Golgi network membrane. The protein resides in the endosome membrane. It catalyses the reaction a 1,2-diacyl-sn-glycero-3-phospho-(1D-myo-inositol) + ATP = a 1,2-diacyl-sn-glycero-3-phospho-(1D-myo-inositol-3-phosphate) + ADP + H(+). In terms of biological role, phosphatidylinositol 3-kinase required for cytoplasm to vacuole transport (Cvt) and autophagy as a part of the autophagy-specific VPS34 PI3-kinase complex I. Also involved in endosome-to-Golgi retrograde transport as part of the VPS34 PI3-kinase complex II. The polypeptide is Probable phosphatidylinositol 3-kinase VPS34 homolog (VPS34) (Encephalitozoon cuniculi (strain GB-M1) (Microsporidian parasite)).